Consider the following 396-residue polypeptide: Acetylornithine aminotransferase 2 (396 aa).

Residues 102-103 and Phe-134 each bind pyridoxal 5'-phosphate; that span reads GA. Arg-137 provides a ligand contact to N(2)-acetyl-L-ornithine. 219–222 is a binding site for pyridoxal 5'-phosphate; the sequence is DEVQ. At Lys-248 the chain carries N6-(pyridoxal phosphate)lysine. Residue Thr-276 participates in pyridoxal 5'-phosphate binding.

This sequence belongs to the class-III pyridoxal-phosphate-dependent aminotransferase family. ArgD subfamily. In terms of assembly, homodimer. Pyridoxal 5'-phosphate serves as cofactor.

It localises to the cytoplasm. The enzyme catalyses N(2)-acetyl-L-ornithine + 2-oxoglutarate = N-acetyl-L-glutamate 5-semialdehyde + L-glutamate. It participates in amino-acid biosynthesis; L-arginine biosynthesis; N(2)-acetyl-L-ornithine from L-glutamate: step 4/4. The chain is Acetylornithine aminotransferase 2 from Bordetella pertussis (strain Tohama I / ATCC BAA-589 / NCTC 13251).